Consider the following 226-residue polypeptide: Leucyl/phenylalanyl-tRNA--protein transferase (226 aa).

The protein belongs to the L/F-transferase family.

It is found in the cytoplasm. It carries out the reaction N-terminal L-lysyl-[protein] + L-leucyl-tRNA(Leu) = N-terminal L-leucyl-L-lysyl-[protein] + tRNA(Leu) + H(+). The enzyme catalyses N-terminal L-arginyl-[protein] + L-leucyl-tRNA(Leu) = N-terminal L-leucyl-L-arginyl-[protein] + tRNA(Leu) + H(+). It catalyses the reaction L-phenylalanyl-tRNA(Phe) + an N-terminal L-alpha-aminoacyl-[protein] = an N-terminal L-phenylalanyl-L-alpha-aminoacyl-[protein] + tRNA(Phe). In terms of biological role, functions in the N-end rule pathway of protein degradation where it conjugates Leu, Phe and, less efficiently, Met from aminoacyl-tRNAs to the N-termini of proteins containing an N-terminal arginine or lysine. The polypeptide is Leucyl/phenylalanyl-tRNA--protein transferase (Ectopseudomonas mendocina (strain ymp) (Pseudomonas mendocina)).